A 306-amino-acid polypeptide reads, in one-letter code: Porphobilinogen deaminase (306 aa).

Cys241 is modified (S-(dipyrrolylmethanemethyl)cysteine).

Belongs to the HMBS family. Monomer. The cofactor is dipyrromethane.

It catalyses the reaction 4 porphobilinogen + H2O = hydroxymethylbilane + 4 NH4(+). It functions in the pathway porphyrin-containing compound metabolism; protoporphyrin-IX biosynthesis; coproporphyrinogen-III from 5-aminolevulinate: step 2/4. Its function is as follows. Tetrapolymerization of the monopyrrole PBG into the hydroxymethylbilane pre-uroporphyrinogen in several discrete steps. The chain is Porphobilinogen deaminase from Acidithiobacillus ferrooxidans (strain ATCC 23270 / DSM 14882 / CIP 104768 / NCIMB 8455) (Ferrobacillus ferrooxidans (strain ATCC 23270)).